Consider the following 64-residue polypeptide: Large ribosomal subunit protein bL35 (64 aa).

The protein belongs to the bacterial ribosomal protein bL35 family.

The sequence is that of Large ribosomal subunit protein bL35 from Clavibacter michiganensis subsp. michiganensis (strain NCPPB 382).